The primary structure comprises 257 residues: Protein Cmaq_1209 (257 aa).

Belongs to the CinA family.

The sequence is that of Protein Cmaq_1209 from Caldivirga maquilingensis (strain ATCC 700844 / DSM 13496 / JCM 10307 / IC-167).